Consider the following 363-residue polypeptide: MPLTKYKAACVTSEPCWFDLEAGVQKTINFINEAGAAGCKLIAFPEVWIPGYPYWMWKINYQQSLPMLKSYRENSLPMDSEEFRRIRRAARDNQIYVSLGFSEIDHATLYLAQALIGPTGEVINHRRKIKPTHVEKLVYGDGAGDTFKSVTQTELGRLGQLNCWENMNPFLKALNVSEGEQIHIAAWPVYPGKETLKYPDPATNVADPASDLVTPAYAIETGTWTLAPFQRLSVEGLKKTTPEGVEPETDPSTYNGHARIYKPDGTLVCKPDKDFDGLLFVDIDLNECHLAKALADFSGHYMRPDLIRLLVDTRRKELITEADTNGGIATYTTRERLGLNIPLDAQAPKQKATAADVPSSSVM.

Residues tyrosine 6–leucine 285 enclose the CN hydrolase domain. The active-site Proton acceptor is glutamate 46. Residue lysine 128 is part of the active site. Residue cysteine 163 is the Nucleophile of the active site.

Belongs to the carbon-nitrogen hydrolase superfamily. Nitrilase family. As to quaternary structure, oligomer of dimers, forming left-handed helical fibers.

The enzyme catalyses formamide = hydrogen cyanide + H2O. In terms of biological role, catalyzes the hydration of cyanide to formamide. Degradation of cyanide may be important for plant pathogenic fungi in infection of cyanogenic plants. The protein is Cyanide hydratase (CyhAB) of Alternaria brassicicola (Dark leaf spot agent).